Here is a 166-residue protein sequence, read N- to C-terminus: Tetranectin-like protein (166 aa).

3 disulfides stabilise this stretch: Cys-37-Cys-47, Cys-64-Cys-160, and Cys-136-Cys-152. Residues 43 to 161 (IHKKCYLASR…CRSEKRYICE (119 aa)) enclose the C-type lectin domain.

This is Tetranectin-like protein from Carcharhinus perezii (Reef shark).